We begin with the raw amino-acid sequence, 660 residues long: Macrolide export ATP-binding/permease protein MacB (660 aa).

One can recognise an ABC transporter domain in the interval 10-248 (LVLENIVRKF…TDSQALYGKQ (239 aa)). Residue 46–53 (GASGSGKS) participates in ATP binding. Helical transmembrane passes span 285 to 305 (FLTM…VALG), 532 to 552 (ILTL…GIGV), 593 to 613 (VIGG…FLLF), and 625 to 645 (SIIL…FSPA).

Belongs to the ABC transporter superfamily. Macrolide exporter (TC 3.A.1.122) family. In terms of assembly, homodimer.

It localises to the cell inner membrane. In terms of biological role, non-canonical ABC transporter that contains transmembrane domains (TMD), which form a pore in the inner membrane, and an ATP-binding domain (NBD), which is responsible for energy generation. Confers resistance against macrolides. The chain is Macrolide export ATP-binding/permease protein MacB from Bartonella henselae (strain ATCC 49882 / DSM 28221 / CCUG 30454 / Houston 1) (Rochalimaea henselae).